Consider the following 299-residue polypeptide: Methionyl-tRNA formyltransferase (299 aa).

Residue 109-112 (SLLP) participates in (6S)-5,6,7,8-tetrahydrofolate binding.

This sequence belongs to the Fmt family.

It carries out the reaction L-methionyl-tRNA(fMet) + (6R)-10-formyltetrahydrofolate = N-formyl-L-methionyl-tRNA(fMet) + (6S)-5,6,7,8-tetrahydrofolate + H(+). Attaches a formyl group to the free amino group of methionyl-tRNA(fMet). The formyl group appears to play a dual role in the initiator identity of N-formylmethionyl-tRNA by promoting its recognition by IF2 and preventing the misappropriation of this tRNA by the elongation apparatus. The sequence is that of Methionyl-tRNA formyltransferase from Wolbachia pipientis subsp. Culex pipiens (strain wPip).